The chain runs to 150 residues: PTS system galactitol-specific EIIA component (150 aa).

Residues 1 to 144 form the PTS EIIA type-2 domain; sequence MTNLFVRSGI…TQLKEYFTKY (144 aa). The active-site Tele-phosphohistidine intermediate is the histidine 62. Position 62 is a phosphohistidine; by HPr (histidine 62).

As to quaternary structure, forms a complex with one each of subunit of GatA, GatB and 2 subunits of GatC.

Its subcellular location is the cytoplasm. Its function is as follows. The phosphoenolpyruvate-dependent sugar phosphotransferase system (sugar PTS), a major carbohydrate active transport system, catalyzes the phosphorylation of incoming sugar substrates concomitantly with their translocation across the cell membrane. The enzyme II complex composed of GatA, GatB and GatC is involved in galactitol transport. The polypeptide is PTS system galactitol-specific EIIA component (gatA) (Escherichia coli O157:H7).